The primary structure comprises 259 residues: Haloacid dehalogenase-like hydrolase domain-containing protein 2 (259 aa).

Mg(2+) contacts are provided by Asp13 and Ser15. Substrate-binding positions include 13–15 (DLS) and 46–47 (TN). Positions 47-71 (NTTKESKQDLLERLRKLEFDISEDE) form a coiled coil. At Lys50 the chain carries N6-succinyllysine. Lys179 is a substrate binding site. Asp204 contributes to the Mg(2+) binding site.

The protein belongs to the HAD-like hydrolase superfamily. It depends on Mg(2+) as a cofactor.

This is Haloacid dehalogenase-like hydrolase domain-containing protein 2 (HDHD2) from Homo sapiens (Human).